A 227-amino-acid chain; its full sequence is Fibrillarin-like rRNA/tRNA 2'-O-methyltransferase (227 aa).

Residues 86–87 (TT), 105–106 (EF), 130–131 (DA), and 150–153 (DVAQ) each bind S-adenosyl-L-methionine.

Belongs to the methyltransferase superfamily. Fibrillarin family. In terms of assembly, interacts with nop5. Component of box C/D small ribonucleoprotein (sRNP) particles that contain rpl7ae, FlpA and nop5, plus a guide RNA. These sRNP particles form homodimers, giving rise to an asymmetric holoenzyme.

In terms of biological role, involved in pre-rRNA and tRNA processing. Utilizes the methyl donor S-adenosyl-L-methionine to catalyze the site-specific 2'-hydroxyl methylation of ribose moieties in rRNA and tRNA. Site specificity is provided by a guide RNA that base pairs with the substrate. Methylation occurs at a characteristic distance from the sequence involved in base pairing with the guide RNA. The sequence is that of Fibrillarin-like rRNA/tRNA 2'-O-methyltransferase from Pyrococcus furiosus (strain ATCC 43587 / DSM 3638 / JCM 8422 / Vc1).